The primary structure comprises 261 residues: Triosephosphate isomerase (261 aa).

Residue 10–12 (NWK) participates in substrate binding. Catalysis depends on His-100, which acts as the Electrophile. Glu-172 serves as the catalytic Proton acceptor. Residues Gly-178, Ser-218, and 239–240 (GG) each bind substrate.

It belongs to the triosephosphate isomerase family. In terms of assembly, homodimer.

It is found in the cytoplasm. The enzyme catalyses D-glyceraldehyde 3-phosphate = dihydroxyacetone phosphate. It functions in the pathway carbohydrate biosynthesis; gluconeogenesis. The protein operates within carbohydrate degradation; glycolysis; D-glyceraldehyde 3-phosphate from glycerone phosphate: step 1/1. In terms of biological role, involved in the gluconeogenesis. Catalyzes stereospecifically the conversion of dihydroxyacetone phosphate (DHAP) to D-glyceraldehyde-3-phosphate (G3P). This chain is Triosephosphate isomerase, found in Nocardia farcinica (strain IFM 10152).